Reading from the N-terminus, the 381-residue chain is Arf-GAP with dual PH domain-containing protein 2 (381 aa).

Residues 9-131 (KRLLELLRAP…FMADGETISL (123 aa)) form the Arf-GAP domain. The C4-type zinc finger occupies 25–48 (CADCGAADPDWASYKLGIFICLNC). PH domains lie at 132-233 (PGNR…AARL) and 255-361 (NYLK…GVLS).

Highly expressed in placenta, spleen, kidney, skeletal muscle and adrenal gland. Weakly expressed in thyroid, liver, heart, lung, small intestine, peripheral blood leukocytes. Not detected in spinal cord, brain, stomach, trachea, colon, lymph node and bone marrow.

The protein localises to the cytoplasm. The protein resides in the cell membrane. Functionally, GTPase-activating protein for the ADP ribosylation factor family (Potential). Binds phosphatidylinositol 3,4,5-trisphosphate (PtdInsP3) and inositol 1,3,4,5-tetrakisphosphate (InsP4). Possesses a stoichiometry of two binding sites for InsP4 with identical affinity. The sequence is that of Arf-GAP with dual PH domain-containing protein 2 (ADAP2) from Homo sapiens (Human).